We begin with the raw amino-acid sequence, 340 residues long: Complement decay-accelerating factor (340 aa).

Sushi domains follow at residues 1–55 (VPNA…FCNR), 56–119 (SCEV…FCKK), 120–181 (KSCP…ECRE), and 182–244 (IYCP…ECRG). A disulfide bridge connects residues cysteine 24 and cysteine 53. An N-linked (GlcNAc...) asparagine glycan is attached at asparagine 54. 6 disulfides stabilise this stretch: cysteine 57-cysteine 104, cysteine 88-cysteine 117, cysteine 122-cysteine 163, cysteine 149-cysteine 179, cysteine 184-cysteine 226, and cysteine 212-cysteine 242. Asparagine 107 is a glycosylation site (N-linked (GlcNAc...) asparagine). The interval 235 to 317 (WSGPPPECRG…SGTTSGTTSL (83 aa)) is disordered. The segment covering 246–268 (SLTSKVPPTVQKPTTVNVPTTEV) has biased composition (polar residues). 2 stretches are compositionally biased toward low complexity: residues 269–287 (SPTS…AQAT) and 307–317 (GSGTTSGTTSL). Serine 312 carries the GPI-anchor amidated serine lipid modification. Positions 313–340 (GTTSLLSGHKCFTLTGLLGTLVTMGLLT) are cleaved as a propeptide — removed in mature form.

This sequence belongs to the receptors of complement activation (RCA) family. Monomer (major form) and non-disulfide-linked, covalent homodimer (minor form). Interacts with ADGRE5. Post-translationally, the Ser/Thr-rich domain is heavily O-glycosylated.

The protein resides in the cell membrane. This protein recognizes C4b and C3b fragments that condense with cell-surface hydroxyl or amino groups when nascent C4b and C3b are locally generated during C4 and c3 activation. Interaction of daf with cell-associated C4b and C3b polypeptides interferes with their ability to catalyze the conversion of C2 and factor B to enzymatically active C2a and Bb and thereby prevents the formation of C4b2a and C3bBb, the amplification convertases of the complement cascade. Inhibits complement activation by destabilizing and preventing the formation of C3 and C5 convertases, which prevents complement damage. The chain is Complement decay-accelerating factor (CD55) from Pongo pygmaeus (Bornean orangutan).